A 359-amino-acid polypeptide reads, in one-letter code: Acidic skeletal organic matrix protein (359 aa).

Positions Met1–Ser26 are cleaved as a signal peptide. 2 disordered regions span residues Phe60 to Asp83 and Ser224 to Glu254. Residues Asp66–Ser89 adopt a coiled-coil conformation.

As to expression, component of the acid-insoluble and acid-soluble organic matrix of the aragonitic skeleton (at protein level).

It is found in the secreted. This chain is Acidic skeletal organic matrix protein, found in Acropora millepora (Staghorn coral).